Consider the following 69-residue polypeptide: Toxin Tz2 (69 aa).

A signal peptide spans Ile-1–Gly-7. Residues Lys-8–Cys-69 enclose the LCN-type CS-alpha/beta domain. 4 disulfides stabilise this stretch: Cys-19/Cys-69, Cys-23/Cys-45, Cys-31/Cys-50, and Cys-35/Cys-52.

This sequence belongs to the long (4 C-C) scorpion toxin superfamily. Sodium channel inhibitor family. Beta subfamily. As to expression, expressed by the venom gland.

Its subcellular location is the secreted. Beta toxins bind voltage-independently at site-4 of sodium channels (Nav) and shift the voltage of activation toward more negative potentials thereby affecting sodium channel activation and promoting spontaneous and repetitive firing. The polypeptide is Toxin Tz2 (Tityus zulianus (Venezuelan scorpion)).